The chain runs to 77 residues: Cysteine-rich protein 1 (77 aa).

Residues 2 to 63 (PKCPKCNKEV…HPCYAAMFGP (62 aa)) enclose the LIM zinc-binding domain. Residues Lys-9 and Lys-22 each carry the N6-acetyllysine modification. An Omega-N-methylarginine modification is found at Arg-68.

Its function is as follows. Seems to have a role in zinc absorption and may function as an intracellular zinc transport protein. This chain is Cysteine-rich protein 1 (CRIP1), found in Homo sapiens (Human).